A 115-amino-acid polypeptide reads, in one-letter code: Protein translation factor SUI1 homolog (115 aa).

Belongs to the SUI1 family. Expressed in all tissues examined.

Functionally, probably involved in translation. The chain is Protein translation factor SUI1 homolog (GOS2) from Oryza sativa subsp. indica (Rice).